Here is a 482-residue protein sequence, read N- to C-terminus: Scarecrow-like protein 3 (482 aa).

The GRAS domain occupies Leu45–Arg479. Positions Leu52–Lys115 are leucine repeat I (LRI). Residues Arg134–Gly199 form a VHIID region. A VHIID motif is present at residues Val165–Asp169. A leucine repeat II (LRII) region spans residues Gln209–Gln241. Residues Leu250–Asn401 are PFYRE. The disordered stretch occupies residues Glu302 to Pro324. Positions Met305–Pro324 are enriched in polar residues. Positions Ser404–Arg479 are SAW.

It belongs to the GRAS family. Binds to zinc finger proteins MGP/IDD3, IDD4, IDD5, BIB/IDD9 and JKD/IDD10. In terms of tissue distribution, expressed in seedlings, root epidermis, leaves, flowers and siliques.

Its subcellular location is the nucleus. Probable transcription factor involved in plant development. The sequence is that of Scarecrow-like protein 3 from Arabidopsis thaliana (Mouse-ear cress).